The primary structure comprises 448 residues: High mobility group B protein 15 (448 aa).

The region spanning 29–120 (VADPRLFMTS…LLNNYEQIYF (92 aa)) is the ARID domain. Residues 219–236 (PQQSHGVLPNTLNISANP) are compositionally biased toward polar residues. Disordered stretches follow at residues 219–270 (PQQS…RSGY), 333–352 (KKNG…LPEQ), and 366–448 (VEED…AEQN). Positions 244 to 255 (TKRRRRRKKSEI) are enriched in basic residues. The segment at residues 263–330 (PKPNRSGYNF…RYRTEMEDYR (68 aa)) is a DNA-binding region (HMG box). Acidic residues predominate over residues 389 to 398 (SIETDPELEE). Low complexity predominate over residues 399 to 412 (PSLNPSGPNLNPNP).

The protein belongs to the HMGB family.

The protein resides in the nucleus. Functionally, binds preferentially DNA with A/T-rich content. This chain is High mobility group B protein 15 (HMGB15), found in Arabidopsis thaliana (Mouse-ear cress).